We begin with the raw amino-acid sequence, 75 residues long: UPF0352 protein YejL (75 aa).

The protein belongs to the UPF0352 family.

The protein is UPF0352 protein YejL of Salmonella arizonae (strain ATCC BAA-731 / CDC346-86 / RSK2980).